The sequence spans 696 residues: DNA ligase (696 aa).

NAD(+) contacts are provided by residues Asp55–Asp59, Ser105–Leu106, and Glu137. The N6-AMP-lysine intermediate role is filled by Lys139. NAD(+) is bound by residues Arg160, Glu194, Lys310, and Lys334. 4 residues coordinate Zn(2+): Cys428, Cys431, Cys446, and Cys451. The 82-residue stretch at Asn615–Asp696 folds into the BRCT domain.

This sequence belongs to the NAD-dependent DNA ligase family. LigA subfamily. Mg(2+) is required as a cofactor. Requires Mn(2+) as cofactor.

It carries out the reaction NAD(+) + (deoxyribonucleotide)n-3'-hydroxyl + 5'-phospho-(deoxyribonucleotide)m = (deoxyribonucleotide)n+m + AMP + beta-nicotinamide D-nucleotide.. DNA ligase that catalyzes the formation of phosphodiester linkages between 5'-phosphoryl and 3'-hydroxyl groups in double-stranded DNA using NAD as a coenzyme and as the energy source for the reaction. It is essential for DNA replication and repair of damaged DNA. This Fusobacterium nucleatum subsp. nucleatum (strain ATCC 25586 / DSM 15643 / BCRC 10681 / CIP 101130 / JCM 8532 / KCTC 2640 / LMG 13131 / VPI 4355) protein is DNA ligase.